The sequence spans 392 residues: 8-amino-7-oxononanoate synthase (392 aa).

Arg21 is a binding site for substrate. Gly114–Tyr115 contacts pyridoxal 5'-phosphate. His139 is a binding site for substrate. Pyridoxal 5'-phosphate contacts are provided by residues Ser187, Asp212–His215, and Thr243–Lys246. The residue at position 246 (Lys246) is an N6-(pyridoxal phosphate)lysine. Thr359 contributes to the substrate binding site.

Belongs to the class-II pyridoxal-phosphate-dependent aminotransferase family. BioF subfamily. In terms of assembly, homodimer. It depends on pyridoxal 5'-phosphate as a cofactor.

The catalysed reaction is 6-carboxyhexanoyl-[ACP] + L-alanine + H(+) = (8S)-8-amino-7-oxononanoate + holo-[ACP] + CO2. It participates in cofactor biosynthesis; biotin biosynthesis. Its function is as follows. Catalyzes the decarboxylative condensation of pimeloyl-[acyl-carrier protein] and L-alanine to produce 8-amino-7-oxononanoate (AON), [acyl-carrier protein], and carbon dioxide. The protein is 8-amino-7-oxononanoate synthase of Chlorobaculum parvum (strain DSM 263 / NCIMB 8327) (Chlorobium vibrioforme subsp. thiosulfatophilum).